Here is a 558-residue protein sequence, read N- to C-terminus: Delta-1-pyrroline-5-carboxylate dehydrogenase, mitochondrial (558 aa).

NAD(+) is bound by residues serine 198, lysine 223, and 276–280 (GSTGV). The Proton acceptor role is filled by glutamate 306. Cysteine 340 serves as the catalytic Nucleophile. Glutamate 438 is an NAD(+) binding site.

It belongs to the aldehyde dehydrogenase family.

The protein resides in the mitochondrion matrix. It carries out the reaction L-glutamate 5-semialdehyde + NAD(+) + H2O = L-glutamate + NADH + 2 H(+). It participates in amino-acid degradation; L-proline degradation into L-glutamate; L-glutamate from L-proline: step 2/2. Functionally, irreversible conversion of delta-1-pyrroline-5-carboxylate (P5C), derived either from proline or ornithine, to glutamate. This is a necessary step in the pathway interconnecting the urea and tricarboxylic acid cycles. The chain is Delta-1-pyrroline-5-carboxylate dehydrogenase, mitochondrial from Dictyostelium discoideum (Social amoeba).